Reading from the N-terminus, the 221-residue chain is MSGVTSEPIAMDATRFQHTPYYCEENVYLLCKTLCENGVAEATCSDLFVVFISNEKKQVPLWHQKASTRADGVVLWDYHVICVQRKKESDSEPLVWDLDSTLPFPSPLASYVTETIQPSFQLFAEYQRFFRIVHAPLFFKHFASDRRHMKEPDGSWTAQPPPYEPIVAQDGILHNLSEYIAMSGADTLSSLDPETVTAAISQKLGVVVSHTQLQDLFTKLP.

S2 is subject to N-acetylserine. Active-site residues include C23, H79, and D97.

The protein belongs to the NTAQ1 family. In terms of assembly, monomer.

It carries out the reaction N-terminal L-glutaminyl-[protein] + H2O = N-terminal L-glutamyl-[protein] + NH4(+). Its function is as follows. Mediates the side-chain deamidation of N-terminal glutamine residues to glutamate, an important step in N-end rule pathway of protein degradation. Conversion of the resulting N-terminal glutamine to glutamate renders the protein susceptible to arginylation, polyubiquitination and degradation as specified by the N-end rule. Does not act on substrates with internal or C-terminal glutamine and does not act on non-glutamine residues in any position. Involved in immune response. Controls the expression of specific defense-response genes, activates the synthesis pathway for the phytoalexin camalexin, and influences basal resistance to the hemibiotroph pathogen Pseudomonas syringae pv tomato (Pst). This Arabidopsis thaliana (Mouse-ear cress) protein is Protein N-terminal glutamine amidohydrolase.